The chain runs to 438 residues: GTPase Der (438 aa).

2 EngA-type G domains span residues 4 to 168 and 176 to 351; these read PIVA…PAVP and LKVA…EAAN. GTP-binding positions include 10–17, 57–61, 120–123, 182–189, 229–233, and 294–297; these read GRPNVGKS, DTGGI, NKVE, DTAGM, and NKWD. A KH-like domain is found at 352–436; the sequence is RRVATGTLNA…PIRLIFRRGR (85 aa).

It belongs to the TRAFAC class TrmE-Era-EngA-EngB-Septin-like GTPase superfamily. EngA (Der) GTPase family. As to quaternary structure, associates with the 50S ribosomal subunit.

GTPase that plays an essential role in the late steps of ribosome biogenesis. This Moorella thermoacetica (strain ATCC 39073 / JCM 9320) protein is GTPase Der.